The chain runs to 200 residues: Glycerol-3-phosphate acyltransferase (200 aa).

The next 4 membrane-spanning stretches (helical) occupy residues 1–21, 84–104, 116–136, and 159–179; these read MITV…FAVV, VIAG…FLAF, ILLG…MVVA, and FLLE…LLIL.

The protein belongs to the PlsY family. As to quaternary structure, probably interacts with PlsX.

The protein resides in the cell inner membrane. The catalysed reaction is an acyl phosphate + sn-glycerol 3-phosphate = a 1-acyl-sn-glycero-3-phosphate + phosphate. Its pathway is lipid metabolism; phospholipid metabolism. Functionally, catalyzes the transfer of an acyl group from acyl-phosphate (acyl-PO(4)) to glycerol-3-phosphate (G3P) to form lysophosphatidic acid (LPA). This enzyme utilizes acyl-phosphate as fatty acyl donor, but not acyl-CoA or acyl-ACP. The protein is Glycerol-3-phosphate acyltransferase of Nitrosomonas europaea (strain ATCC 19718 / CIP 103999 / KCTC 2705 / NBRC 14298).